The chain runs to 444 residues: IMP-specific 5'-nucleotidase 1 (444 aa).

2 residues coordinate ATP: lysine 132 and histidine 150. Aspartate 170 (nucleophile) is an active-site residue. IMP-binding residues include aspartate 170, aspartate 172, aspartate 178, threonine 204, serine 207, serine 308, aspartate 363, and lysine 371. Mg(2+) is bound by residues aspartate 170 and aspartate 172. Aspartate 172 acts as the Proton donor in catalysis. Aspartate 394 contacts Mg(2+).

This sequence belongs to the ISN1 family. As to quaternary structure, homotetramer. Mg(2+) serves as cofactor.

It localises to the cytoplasm. The enzyme catalyses IMP + H2O = inosine + phosphate. Its activity is regulated as follows. At physiological pH, allosterically activated by ATP. ATP binding is a prerequisite to magnesium and substrate binding. ATP binds to 2 of the subunits in the homotetramer inducing a closure of these 2 subunits and the release of the C-terminal loop, thereby activating the enzyme. In this conformation, the enzyme can bind IMP and magnesium which ultimately leads to the release of ATP. At pH 5, ATP does not have an allosteric role and is dispensable for magnesium and substrate binding. Inhibited by phosphocholine and D-myo-inositol-4-phosphate. Specifically, catalyzes the dephosphorylation of inosine monophosphate (IMP) into inosine. By dephosphorylating IMP, plays a role in the purine salvage pathway. Does not have phosphotransferase activity with IMP as phosphate donor and adenosine as phosphate acceptor. This Plasmodium falciparum (isolate 3D7) protein is IMP-specific 5'-nucleotidase 1.